An 838-amino-acid polypeptide reads, in one-letter code: Axin-2 (838 aa).

The disordered stretch occupies residues 1–75 (MSSAVLVTLL…EGRASPDSPL (75 aa)). The short motif at 21-30 (APRPPVPGEE) is the Tankyrase-binding motif element. The span at 42–55 (KVQSTKPMPVSSNA) shows a compositional bias: polar residues. Basic and acidic residues predominate over residues 56–69 (RRNEDGLGEPEGRA). Residues 81–200 (SLHSLLGDQD…LTSDIYLEYV (120 aa)) form the RGS domain. Disordered regions lie at residues 300 to 333 (SELSSDALTDDSMSMTDSSVDGIPPYRMGSKKQL), 398 to 435 (IREDEEKEGSEQALSSRDGAPVQHPLALLPSGSYEEDP), 450 to 483 (PGCQSPGVGRYSPRSRSPDHHHHHHQQCHALLPT), 568 to 682 (GSRG…AMPP), and 712 to 744 (VASQQRDRNHPATGQAGPTSFSNPSLASEDHKE). A compositionally biased stretch (low complexity) spans 303–318 (SSDALTDDSMSMTDSS). The segment at 327-413 (MGSKKQLQRE…KEGSEQALSS (87 aa)) is interaction with GSK3B. The interaction with beta-catenin stretch occupies residues 413-476 (SRDGAPVQHP…PDHHHHHHQQ (64 aa)). Positions 727 to 737 (AGPTSFSNPSL) are enriched in polar residues. A DIX domain is found at 756-838 (ASELIVTYFF…RILGKVERID (83 aa)).

As to quaternary structure, interacts with SMAD7 and RNF111. Interacts with ANKRD6. Interacts with glycogen synthase kinase-3 beta (GSK3B) and beta-catenin. The interaction between axin and beta-catenin occurs via the armadillo repeats contained in beta-catenin. Interacts with SIAH1. Interacts with SIAH2. Post-translationally, ADP-ribosylated by tankyrase TNKS and TNKS2. Poly-ADP-ribosylated protein is recognized by RNF146, followed by ubiquitination and subsequent activation of the Wnt signaling pathway. In terms of processing, ubiquitinated by RNF146 when poly-ADP-ribosylated, leading to its degradation and subsequent activation of the Wnt signaling pathway. Deubiquitinated by USP34, deubiquitinated downstream of beta-catenin stabilization step: deubiquitination is important Wnt signaling to positively regulate beta-catenin (CTNBB1)-mediated transcription. Probably phosphorylated by GSK3B and dephosphorylated by PP2A. As to expression, expressed in lung and thymus.

It is found in the cytoplasm. Inhibitor of the Wnt signaling pathway. Down-regulates beta-catenin. Probably facilitate the phosphorylation of beta-catenin and APC by GSK3B. The chain is Axin-2 (Axin2) from Rattus norvegicus (Rat).